The primary structure comprises 740 residues: Polyribonucleotide nucleotidyltransferase (740 aa).

Residues aspartate 514 and aspartate 520 each coordinate Mg(2+). One can recognise a KH domain in the interval 580–639 (PRIITVKIPVDKIGEVIGPKRQMINQIQEDTGAEITIEDDGTIYIGAADGPAAEAARATI). An S1 motif domain is found at 651-723 (GERILGSVVK…SRGKLSLIPV (73 aa)).

The protein belongs to the polyribonucleotide nucleotidyltransferase family. Homotrimer. Mg(2+) serves as cofactor.

It is found in the cytoplasm. It catalyses the reaction RNA(n+1) + phosphate = RNA(n) + a ribonucleoside 5'-diphosphate. Involved in mRNA degradation. Catalyzes the phosphorolysis of single-stranded polyribonucleotides processively in the 3'- to 5'-direction. This chain is Polyribonucleotide nucleotidyltransferase, found in Streptomyces antibioticus.